The sequence spans 374 residues: Flagellar P-ring protein (374 aa).

The first 29 residues, 1–29 (MRRVRTTRLFQVACAAIVALASSAMSAHA), serve as a signal peptide directing secretion.

It belongs to the FlgI family. The basal body constitutes a major portion of the flagellar organelle and consists of four rings (L,P,S, and M) mounted on a central rod.

Its subcellular location is the periplasm. The protein resides in the bacterial flagellum basal body. Its function is as follows. Assembles around the rod to form the L-ring and probably protects the motor/basal body from shearing forces during rotation. This is Flagellar P-ring protein from Bradyrhizobium sp. (strain BTAi1 / ATCC BAA-1182).